The sequence spans 421 residues: Putative aspartate aminotransferase, cytoplasmic 2 (421 aa).

Position 249 is an N6-(pyridoxal phosphate)lysine (lysine 249).

It belongs to the class-I pyridoxal-phosphate-dependent aminotransferase family. Homodimer. The cofactor is pyridoxal 5'-phosphate.

The protein resides in the cytoplasm. It catalyses the reaction L-aspartate + 2-oxoglutarate = oxaloacetate + L-glutamate. The polypeptide is Putative aspartate aminotransferase, cytoplasmic 2 (GOT1L1) (Homo sapiens (Human)).